A 299-amino-acid polypeptide reads, in one-letter code: GTPase Era (299 aa).

Residues 5-172 enclose the Era-type G domain; sequence KSGFVSIIGR…IDVLKTYLPE (168 aa). Residues 13 to 20 form a G1 region; that stretch reads GRPNVGKS. Residue 13-20 participates in GTP binding; sequence GRPNVGKS. Residues 39–43 form a G2 region; it reads QTTRN. A G3 region spans residues 60-63; the sequence is DTPG. Residues 60 to 64 and 122 to 125 each bind GTP; these read DTPGI and NKID. The tract at residues 122 to 125 is G4; the sequence is NKID. The interval 151–153 is G5; it reads ISA. In terms of domain architecture, KH type-2 spans 203-280; it reads TSEEIPHAIG…YLELWVKVQR (78 aa).

It belongs to the TRAFAC class TrmE-Era-EngA-EngB-Septin-like GTPase superfamily. Era GTPase family. As to quaternary structure, monomer.

It is found in the cytoplasm. The protein localises to the cell membrane. An essential GTPase that binds both GDP and GTP, with rapid nucleotide exchange. Plays a role in 16S rRNA processing and 30S ribosomal subunit biogenesis and possibly also in cell cycle regulation and energy metabolism. The polypeptide is GTPase Era (Staphylococcus aureus (strain bovine RF122 / ET3-1)).